A 443-amino-acid chain; its full sequence is Protein AknT (443 aa).

This sequence belongs to the cytochrome P450 family.

In terms of biological role, involved in the biosynthesis of the anthracycline antitumor agent aclacinomycin A. AknT is required for the glycosylation of aklavinone aglycone by AknS to yield aclacinomycin T (rhodosaminyl-aklavinone). The chain is Protein AknT from Streptomyces galilaeus.